Reading from the N-terminus, the 285-residue chain is V-set and transmembrane domain-containing protein 2B (285 aa).

Residues 1–28 (MEQRNRLGALGYLPPLLLHALLLFVADA) form the signal peptide. Residues 29–143 (AFTEVPKDVT…DDDTQEHKAQ (115 aa)) enclose the Ig-like V-type domain. Over 29 to 263 (AFTEVPKDVT…HGSGTGRSYT (235 aa)) the chain is Extracellular. An intrachain disulfide couples Cys-49 to Cys-127. The tract at residues 161 to 226 (EAVSHIQSSG…EAAAASAAHT (66 aa)) is disordered. Low complexity-rich tracts occupy residues 177-189 (ASAANANNAGAAS) and 208-226 (PAAIDPAVPEAAAASAAHT). A helical transmembrane segment spans residues 264-284 (TDPLLSLLLLALHKFLRLLLG). Position 285 (His-285) is a topological domain, cytoplasmic.

Its subcellular location is the membrane. The sequence is that of V-set and transmembrane domain-containing protein 2B (VSTM2B) from Homo sapiens (Human).